Reading from the N-terminus, the 159-residue chain is Large ribosomal subunit protein uL15 (159 aa).

A compositionally biased stretch (basic and acidic residues) spans 1 to 11 (MKLNELRDNEG). Positions 1-40 (MKLNELRDNEGARYQSKRLGRGIGSGKGKTSGKGVKGQTS) are disordered. A compositionally biased stretch (gly residues) spans 21–35 (RGIGSGKGKTSGKGV).

Belongs to the universal ribosomal protein uL15 family. As to quaternary structure, part of the 50S ribosomal subunit.

In terms of biological role, binds to the 23S rRNA. This Paramagnetospirillum magneticum (strain ATCC 700264 / AMB-1) (Magnetospirillum magneticum) protein is Large ribosomal subunit protein uL15.